Consider the following 439-residue polypeptide: Glycosyl hydrolase DigH (439 aa).

Residues 1-27 (MDICSRNKKLTIRRPAILVALALLLCS) form the signal peptide. Residue Cys-28 is the site of N-palmitoyl cysteine attachment. Cys-28 carries S-diacylglycerol cysteine lipidation. A disordered region spans residues 34 to 54 (ESMVTPPAGSKPPATTQQSSQ).

The protein belongs to the glycosyl hydrolase-like 10 (GHL10) family.

The protein resides in the cell outer membrane. In terms of biological role, divisome-localized glycosyl hydrolase that cleaves peptide-free (denuded) peptidoglycans. The polypeptide is Glycosyl hydrolase DigH (Escherichia coli O157:H7).